Consider the following 118-residue polypeptide: Putative pterin-4-alpha-carbinolamine dehydratase (118 aa).

This sequence belongs to the pterin-4-alpha-carbinolamine dehydratase family.

The enzyme catalyses (4aS,6R)-4a-hydroxy-L-erythro-5,6,7,8-tetrahydrobiopterin = (6R)-L-erythro-6,7-dihydrobiopterin + H2O. The protein is Putative pterin-4-alpha-carbinolamine dehydratase of Pseudomonas entomophila (strain L48).